Consider the following 230-residue polypeptide: MKSFLFAGIVVVLTVAAVDTLRCIQCNSLKDSCVAKNATECPSNATTSCTSFSTNFYHGEHPTWYEDHACSEENCSNTTVESFTVSVSENETFHFESQCCLGEPCNQTSNTTASPHQVGSGNMECPACYGNNETSCNETRKCYGERCVSIIAEFTNETKTLVLKGCSNVSISTCESLGAGNQTFRGVTFRKFECGDNFSTTTPLATTDTGSQASFTPLALASILLLSLLL.

Residues Met-1–Thr-20 form the signal peptide. N-linked (GlcNAc...) asparagine glycans are attached at residues Asn-37, Asn-44, Asn-74, Asn-77, Asn-90, Asn-106, Asn-110, Asn-132, Asn-137, Asn-156, Asn-168, Asn-181, and Asn-197. The region spanning Cys-125–Ser-172 is the UPAR/Ly6 domain. Ser-211 carries GPI-anchor amidated serine lipidation. Positions Gln-212–Leu-230 are cleaved as a propeptide — removed in mature form.

Belongs to the CNF-like-inhibitor family. Highly N-glycosylated. Not O-glycosylated. In terms of processing, GPI-anchored. The GPI-anchor is cleaved, leading to secretion into the colonic lumen.

It is found in the cell membrane. The protein localises to the secreted. Functionally, secreted protein specifically required to prevent invasion of Gram-negative bacteria in the inner mucus layer of the colon epithelium, a portion of the large intestine which is free of commensal microbiota. Prevents invasion of flagellated microbiota by binding to the flagellum of bacteria, such as P.mirabilis, thereby inhibiting bacterial motility in the intestinal lumen. Segregation of intestinal bacteria and epithelial cells in the colon is required to preserve intestinal homeostasis. The sequence is that of Ly6/PLAUR domain-containing protein 8 (LYPD8) from Bos taurus (Bovine).